The sequence spans 59 residues: Large ribosomal subunit protein uL30 (59 aa).

Belongs to the universal ribosomal protein uL30 family. As to quaternary structure, part of the 50S ribosomal subunit.

The chain is Large ribosomal subunit protein uL30 from Escherichia coli (strain UTI89 / UPEC).